The following is a 437-amino-acid chain: Protein arginine methyltransferase NDUFAF7 homolog, mitochondrial (437 aa).

Residues 21–49 (RPNLGATGTPKMEPPKEQPEASSKAESGH) form a disordered region.

The protein belongs to the NDUFAF7 family.

It is found in the mitochondrion. It carries out the reaction L-arginyl-[protein] + 2 S-adenosyl-L-methionine = N(omega),N(omega)'-dimethyl-L-arginyl-[protein] + 2 S-adenosyl-L-homocysteine + 2 H(+). Arginine methyltransferase involved in the assembly or stability of mitochondrial NADH:ubiquinone oxidoreductase complex (complex I). In Drosophila melanogaster (Fruit fly), this protein is Protein arginine methyltransferase NDUFAF7 homolog, mitochondrial.